The following is an 823-amino-acid chain: Semaphorin-4B (823 aa).

Residues 1–30 form the signal peptide; it reads MGRASRSAVLRRALLLLLLLLLLRTTTTRA. The Extracellular segment spans residues 31 to 703; sequence LGPRISVPLG…WGADKSYWNE (673 aa). The Sema domain occupies 34–510; sequence RISVPLGSEE…SHSGVVQVPV (477 aa). Residues asparagine 53, asparagine 56, and asparagine 83 are each glycosylated (N-linked (GlcNAc...) asparagine). An intrachain disulfide couples cysteine 107 to cysteine 118. N-linked (GlcNAc...) asparagine glycosylation occurs at asparagine 129. 3 disulfide bridges follow: cysteine 136/cysteine 145, cysteine 273/cysteine 386, and cysteine 297/cysteine 346. Asparagine 397 and asparagine 512 each carry an N-linked (GlcNAc...) asparagine glycan. The region spanning 512–582 is the PSI domain; sequence NCSLYPTCGD…RFLVPGKPCK (71 aa). A disulfide bridge links cysteine 513 with cysteine 530. N-linked (GlcNAc...) asparagine glycosylation is found at asparagine 567, asparagine 615, and asparagine 680. The Ig-like C2-type domain maps to 589 to 649; the sequence is NTVNTLACPL…FQCWSIEEGF (61 aa). Cysteine 596 and cysteine 642 form a disulfide bridge. The helical transmembrane segment at 704 to 724 threads the bilayer; that stretch reads FLVMCTLFVFAMVLLFLFFLY. Residues 725–823 lie on the Cytoplasmic side of the membrane; that stretch reads RHRDGMKLFL…LGSEIRDSVV (99 aa). A phosphoserine mark is found at serine 779, serine 780, serine 804, and serine 816.

Belongs to the semaphorin family. Interacts with GIPC PDZ domain.

The protein resides in the membrane. In terms of biological role, inhibits axonal extension by providing local signals to specify territories inaccessible for growing axons. The sequence is that of Semaphorin-4B from Mus musculus (Mouse).